A 170-amino-acid chain; its full sequence is Adenine phosphoribosyltransferase (170 aa).

Belongs to the purine/pyrimidine phosphoribosyltransferase family. As to quaternary structure, homodimer.

It is found in the cytoplasm. The catalysed reaction is AMP + diphosphate = 5-phospho-alpha-D-ribose 1-diphosphate + adenine. The protein operates within purine metabolism; AMP biosynthesis via salvage pathway; AMP from adenine: step 1/1. In terms of biological role, catalyzes a salvage reaction resulting in the formation of AMP, that is energically less costly than de novo synthesis. The sequence is that of Adenine phosphoribosyltransferase from Pseudothermotoga lettingae (strain ATCC BAA-301 / DSM 14385 / NBRC 107922 / TMO) (Thermotoga lettingae).